Here is a 306-residue protein sequence, read N- to C-terminus: tRNA dimethylallyltransferase 1 (306 aa).

15–22 provides a ligand contact to ATP; it reads GPTGSGKS. 17-22 is a substrate binding site; the sequence is TGSGKS. Positions 40-43 are interaction with substrate tRNA; that stretch reads DSMQ.

This sequence belongs to the IPP transferase family. In terms of assembly, monomer. It depends on Mg(2+) as a cofactor.

It carries out the reaction adenosine(37) in tRNA + dimethylallyl diphosphate = N(6)-dimethylallyladenosine(37) in tRNA + diphosphate. Catalyzes the transfer of a dimethylallyl group onto the adenine at position 37 in tRNAs that read codons beginning with uridine, leading to the formation of N6-(dimethylallyl)adenosine (i(6)A). This Citrifermentans bemidjiense (strain ATCC BAA-1014 / DSM 16622 / JCM 12645 / Bem) (Geobacter bemidjiensis) protein is tRNA dimethylallyltransferase 1.